The following is a 189-amino-acid chain: dCTP deaminase (189 aa).

DCTP is bound by residues 112–117 (KSTYAR), 136–138 (TLE), glutamine 157, tyrosine 171, and glutamine 181. Glutamate 138 acts as the Proton donor/acceptor in catalysis.

It belongs to the dCTP deaminase family. As to quaternary structure, homotrimer.

The enzyme catalyses dCTP + H2O + H(+) = dUTP + NH4(+). It functions in the pathway pyrimidine metabolism; dUMP biosynthesis; dUMP from dCTP (dUTP route): step 1/2. Catalyzes the deamination of dCTP to dUTP. The chain is dCTP deaminase from Burkholderia mallei (strain NCTC 10247).